Consider the following 219-residue polypeptide: Uracil-DNA glycosylase (219 aa).

Asp-63 serves as the catalytic Proton acceptor.

It belongs to the uracil-DNA glycosylase (UDG) superfamily. UNG family.

It localises to the cytoplasm. The catalysed reaction is Hydrolyzes single-stranded DNA or mismatched double-stranded DNA and polynucleotides, releasing free uracil.. Functionally, excises uracil residues from the DNA which can arise as a result of misincorporation of dUMP residues by DNA polymerase or due to deamination of cytosine. This chain is Uracil-DNA glycosylase, found in Mesomycoplasma hyopneumoniae (strain 7448) (Mycoplasma hyopneumoniae).